A 1381-amino-acid chain; its full sequence is Contactin-associated protein 1 (1381 aa).

The first 20 residues, 1-20 (MMSLRLFSILLAAVVSGAQG), serve as a signal peptide directing secretion. Topologically, residues 21–1284 (WGYYGCNEEL…PYYHDDGWIA (1264 aa)) are extracellular. Residues 26-169 (CNEELVGPLY…IGLRLGIYGC (144 aa)) enclose the F5/8 type C domain. C26 and C169 form a disulfide bridge. N-linked (GlcNAc...) asparagine glycosylation is found at N121, N129, and N277. 2 consecutive Laminin G-like domains span residues 204–356 (FKTE…AFRC) and 390–539 (FRTW…FDTC). A disulfide bridge links C324 with C356. N-linked (GlcNAc...) asparagine glycans are attached at residues N421, N500, and N519. Disulfide bonds link C507-C539, C545-C556, C550-C565, and C567-C577. Positions 544-576 (RCSPNMCEHDGRCYQSWDDFICYCELTGYKGVT) constitute an EGF-like 1 domain. The Fibrinogen C-terminal domain occupies 577-796 (CHEPLYKESC…NTISFRTGAA (220 aa)). N-linked (GlcNAc...) asparagine glycans are attached at residues N598, N654, N665, N764, N805, N844, N861, N949, and N957. Residues 814-958 (FRTSAPSGVF…NASEGTFPNC (145 aa)) enclose the Laminin G-like 3 domain. 4 disulfide bridges follow: C931–C958, C962–C975, C969–C984, and C986–C996. The EGF-like 2 domain maps to 962–996 (CTHPRFPCFHGGRCVERYSYYTCDCDLTAFDGPYC). N1079 and N1148 each carry an N-linked (GlcNAc...) asparagine glycan. The region spanning 1089–1251 (FSTSSAPAVL…VQGELSESNC (163 aa)) is the Laminin G-like 4 domain. C1210 and C1251 are joined by a disulfide. A helical transmembrane segment spans residues 1285–1305 (ILLGFLVAFLLLGLVGMLVLF). Residues 1306 to 1381 (YLQNHRYKGS…PQILEESRSE (76 aa)) lie on the Cytoplasmic side of the membrane. Residues 1317–1381 (HTNEPKATHD…PQILEESRSE (65 aa)) form a disordered region. Residues 1319–1329 (NEPKATHDSHP) are compositionally biased toward basic and acidic residues. An SH3-binding motif is present at residues 1329–1366 (PGGKAPLPPSGPAQAPAPTPAPTQVPTPAPAPASGPGP). Residues 1334-1363 (PLPPSGPAQAPAPTPAPTQVPTPAPAPASG) are compositionally biased toward pro residues. The residue at position 1380 (S1380) is a Phosphoserine.

The protein belongs to the neurexin family. Interacts with CNTN1/contactin in cis form. As to expression, predominantly expressed in brain. In myelinated nerve fibers of the CNS predominantly found in paranodal axoglial junctions. In unmyelinated nerve fibers of the CNS diffusely distributed along the entire surface. Weak expression is detected in ovary, pancreas, colon, lung, heart, intestine and testis.

Its subcellular location is the membrane. It localises to the cell junction. The protein localises to the paranodal septate junction. Required, with CNTNAP2, for radial and longitudinal organization of myelinated axons. Plays a role in the formation of functional distinct domains critical for saltatory conduction of nerve impulses in myelinated nerve fibers. Demarcates the paranodal region of the axo-glial junction. In association with contactin involved in the signaling between axons and myelinating glial cells. The protein is Contactin-associated protein 1 (Cntnap1) of Rattus norvegicus (Rat).